Reading from the N-terminus, the 359-residue chain is Peptide chain release factor 1 (359 aa).

Glutamine 236 is subject to N5-methylglutamine.

It belongs to the prokaryotic/mitochondrial release factor family. Methylated by PrmC. Methylation increases the termination efficiency of RF1.

The protein resides in the cytoplasm. Functionally, peptide chain release factor 1 directs the termination of translation in response to the peptide chain termination codons UAG and UAA. The protein is Peptide chain release factor 1 of Streptococcus pneumoniae serotype 4 (strain ATCC BAA-334 / TIGR4).